The primary structure comprises 185 residues: Early nodulin-like protein 17 (185 aa).

An N-terminal signal peptide occupies residues 1 to 21 (MARRDQLVSFLCFFLIVSAVA). The Phytocyanin domain occupies 37–137 (KQYVVGGRSG…GQRLMINVDS (101 aa)). Asparagine 79 and asparagine 94 each carry an N-linked (GlcNAc...) asparagine glycan. Cysteine 93 and cysteine 125 are joined by a disulfide. Positions 136–155 (DSAPSPSPSPSPAPQEAATA) are disordered. Serine 156 carries GPI-anchor amidated serine lipidation. The propeptide at 157 to 185 (AATSSSAATAAHALLLAAMAMMGLILGEW) is removed in mature form.

The protein belongs to the early nodulin-like (ENODL) family. Expressed ubiquitously. Accumulates mainly in anthers, stigmas and ovaries.

The protein resides in the cell membrane. Functionally, may act as a carbohydrate transporter. Required for male fertility and seed yield. In Oryza sativa subsp. japonica (Rice), this protein is Early nodulin-like protein 17.